The chain runs to 280 residues: Tryptophan synthase alpha chain (280 aa).

Residues Glu-49 and Asp-60 each act as proton acceptor in the active site.

Belongs to the TrpA family. In terms of assembly, tetramer of two alpha and two beta chains.

It catalyses the reaction (1S,2R)-1-C-(indol-3-yl)glycerol 3-phosphate + L-serine = D-glyceraldehyde 3-phosphate + L-tryptophan + H2O. Its pathway is amino-acid biosynthesis; L-tryptophan biosynthesis; L-tryptophan from chorismate: step 5/5. In terms of biological role, the alpha subunit is responsible for the aldol cleavage of indoleglycerol phosphate to indole and glyceraldehyde 3-phosphate. This is Tryptophan synthase alpha chain from Corynebacterium glutamicum (strain R).